The primary structure comprises 315 residues: CRISPR-associated endonuclease Cas1 1 (315 aa).

Positions 144, 208, and 223 each coordinate Mn(2+).

This sequence belongs to the CRISPR-associated endonuclease Cas1 family. In terms of assembly, homodimer, forms a heterotetramer with a Cas2 homodimer. It depends on Mg(2+) as a cofactor. Mn(2+) is required as a cofactor.

CRISPR (clustered regularly interspaced short palindromic repeat), is an adaptive immune system that provides protection against mobile genetic elements (viruses, transposable elements and conjugative plasmids). CRISPR clusters contain spacers, sequences complementary to antecedent mobile elements, and target invading nucleic acids. CRISPR clusters are transcribed and processed into CRISPR RNA (crRNA). Acts as a dsDNA endonuclease. Involved in the integration of spacer DNA into the CRISPR cassette. The protein is CRISPR-associated endonuclease Cas1 1 of Thermus thermophilus (strain ATCC 27634 / DSM 579 / HB8).